Reading from the N-terminus, the 549-residue chain is Arginine--tRNA ligase (549 aa).

The 'HIGH' region signature appears at 113-123 (ANPDGPLHIGH).

Belongs to the class-I aminoacyl-tRNA synthetase family.

Its subcellular location is the cytoplasm. It catalyses the reaction tRNA(Arg) + L-arginine + ATP = L-arginyl-tRNA(Arg) + AMP + diphosphate. This chain is Arginine--tRNA ligase (argS), found in Archaeoglobus fulgidus (strain ATCC 49558 / DSM 4304 / JCM 9628 / NBRC 100126 / VC-16).